A 213-amino-acid polypeptide reads, in one-letter code: Probable nicotinate-nucleotide adenylyltransferase (213 aa).

It belongs to the NadD family.

It carries out the reaction nicotinate beta-D-ribonucleotide + ATP + H(+) = deamido-NAD(+) + diphosphate. Its pathway is cofactor biosynthesis; NAD(+) biosynthesis; deamido-NAD(+) from nicotinate D-ribonucleotide: step 1/1. In terms of biological role, catalyzes the reversible adenylation of nicotinate mononucleotide (NaMN) to nicotinic acid adenine dinucleotide (NaAD). This chain is Probable nicotinate-nucleotide adenylyltransferase, found in Escherichia coli O17:K52:H18 (strain UMN026 / ExPEC).